The chain runs to 631 residues: Alpha-dioxygenase 2 (631 aa).

The N-terminal stretch at 1-20 (MGFSPSSSWFLHPQLHHVVS) is a signal peptide. H157 provides a ligand contact to heme b. Y378 functions as the Proton acceptor in the catalytic mechanism. A heme b-binding site is contributed by H381. N583 carries an N-linked (GlcNAc...) asparagine glycan.

It belongs to the peroxidase family. It depends on heme b as a cofactor. Expressed in seedlings (cotyledons, young leaves, and hypocotyls), flowers, siliques and old leaves.

Functionally, alpha-dioxygenase that catalyzes the primary oxygenation of fatty acids into oxylipins. May be involved in the senescence process. This is Alpha-dioxygenase 2 (DOX2) from Arabidopsis thaliana (Mouse-ear cress).